The chain runs to 86 residues: Small ribosomal subunit protein uS15 (86 aa).

This sequence belongs to the universal ribosomal protein uS15 family. Part of the 30S ribosomal subunit. Forms a bridge to the 50S subunit in the 70S ribosome, contacting the 23S rRNA.

One of the primary rRNA binding proteins, it binds directly to 16S rRNA where it helps nucleate assembly of the platform of the 30S subunit by binding and bridging several RNA helices of the 16S rRNA. Its function is as follows. Forms an intersubunit bridge (bridge B4) with the 23S rRNA of the 50S subunit in the ribosome. The protein is Small ribosomal subunit protein uS15 of Endomicrobium trichonymphae.